Here is a 616-residue protein sequence, read N- to C-terminus: Dihydroxy-acid dehydratase (616 aa).

Residue Asp-81 participates in Mg(2+) binding. Position 122 (Cys-122) interacts with [2Fe-2S] cluster. 2 residues coordinate Mg(2+): Asp-123 and Lys-124. N6-carboxylysine is present on Lys-124. Cys-195 provides a ligand contact to [2Fe-2S] cluster. Glu-491 contributes to the Mg(2+) binding site. Residue Ser-517 is the Proton acceptor of the active site.

The protein belongs to the IlvD/Edd family. In terms of assembly, homodimer. [2Fe-2S] cluster serves as cofactor. Requires Mg(2+) as cofactor.

The enzyme catalyses (2R)-2,3-dihydroxy-3-methylbutanoate = 3-methyl-2-oxobutanoate + H2O. The catalysed reaction is (2R,3R)-2,3-dihydroxy-3-methylpentanoate = (S)-3-methyl-2-oxopentanoate + H2O. It functions in the pathway amino-acid biosynthesis; L-isoleucine biosynthesis; L-isoleucine from 2-oxobutanoate: step 3/4. The protein operates within amino-acid biosynthesis; L-valine biosynthesis; L-valine from pyruvate: step 3/4. In terms of biological role, functions in the biosynthesis of branched-chain amino acids. Catalyzes the dehydration of (2R,3R)-2,3-dihydroxy-3-methylpentanoate (2,3-dihydroxy-3-methylvalerate) into 2-oxo-3-methylpentanoate (2-oxo-3-methylvalerate) and of (2R)-2,3-dihydroxy-3-methylbutanoate (2,3-dihydroxyisovalerate) into 2-oxo-3-methylbutanoate (2-oxoisovalerate), the penultimate precursor to L-isoleucine and L-valine, respectively. The polypeptide is Dihydroxy-acid dehydratase (Salmonella paratyphi A (strain ATCC 9150 / SARB42)).